Reading from the N-terminus, the 277-residue chain is 3-methyl-2-oxobutanoate hydroxymethyltransferase (277 aa).

Residues aspartate 53 and aspartate 96 each coordinate Mg(2+). 3-methyl-2-oxobutanoate is bound by residues 53–54 (DS), aspartate 96, and lysine 126. Glutamate 128 serves as a coordination point for Mg(2+). The Proton acceptor role is filled by glutamate 195.

Belongs to the PanB family. Homodecamer; pentamer of dimers. It depends on Mg(2+) as a cofactor.

The protein resides in the cytoplasm. It carries out the reaction 3-methyl-2-oxobutanoate + (6R)-5,10-methylene-5,6,7,8-tetrahydrofolate + H2O = 2-dehydropantoate + (6S)-5,6,7,8-tetrahydrofolate. Its pathway is cofactor biosynthesis; (R)-pantothenate biosynthesis; (R)-pantoate from 3-methyl-2-oxobutanoate: step 1/2. In terms of biological role, catalyzes the reversible reaction in which hydroxymethyl group from 5,10-methylenetetrahydrofolate is transferred onto alpha-ketoisovalerate to form ketopantoate. The chain is 3-methyl-2-oxobutanoate hydroxymethyltransferase from Pelodictyon phaeoclathratiforme (strain DSM 5477 / BU-1).